Here is a 287-residue protein sequence, read N- to C-terminus: Glycine--tRNA ligase alpha subunit (287 aa).

This sequence belongs to the class-II aminoacyl-tRNA synthetase family. Tetramer of two alpha and two beta subunits.

The protein localises to the cytoplasm. The enzyme catalyses tRNA(Gly) + glycine + ATP = glycyl-tRNA(Gly) + AMP + diphosphate. The sequence is that of Glycine--tRNA ligase alpha subunit from Petrotoga mobilis (strain DSM 10674 / SJ95).